Here is a 365-residue protein sequence, read N- to C-terminus: Nicotinate N-methyltransferase 1 (365 aa).

Asp232 provides a ligand contact to S-adenosyl-L-methionine.

This sequence belongs to the class I-like SAM-binding methyltransferase superfamily. Cation-independent O-methyltransferase family.

The catalysed reaction is nicotinate + S-adenosyl-L-methionine = N-methylnicotinate + S-adenosyl-L-homocysteine. Functionally, involved in nicotinate detoxification in planta. Catalyzes the conversion of nicotinate to N-methylnicotinate, which is a detoxified form of endogenous nicotinate in planta. In Oryza sativa subsp. japonica (Rice), this protein is Nicotinate N-methyltransferase 1.